Reading from the N-terminus, the 310-residue chain is Olfactory receptor 7A42 (310 aa).

The Extracellular portion of the chain corresponds to 1–25 (MESGNSTRRIPSFFLLGFSENPHLQ). Residue Asn5 is glycosylated (N-linked (GlcNAc...) asparagine). Residues 26 to 46 (FLIFVLFLSMYLVTVLGNLLI) traverse the membrane as a helical segment. The Cytoplasmic segment spans residues 47–67 (IMVIITQSPLHTPMYFFLANL). A helical transmembrane segment spans residues 68 to 88 (SFVDICFTSTTVPKMLVNIQT). Residues 89–100 (QSKAITYADCIS) lie on the Extracellular side of the membrane. Cys98 and Cys190 are disulfide-bonded. Residues 101-121 (QMSVFLVFAELDNFLLAVMAY) traverse the membrane as a helical segment. The Cytoplasmic portion of the chain corresponds to 122–135 (DRYVAICHPLYYTF). A helical membrane pass occupies residues 136–156 (IVNQHLCILMVLLSWVVSILH). The Extracellular segment spans residues 157-202 (AFLQSSIVLQLTFCGDVKIPHFFCELNQLSQLTCLDSLSSHLIMNL). A helical membrane pass occupies residues 203–223 (VPVLLAVISFSSILYSYFKIV). The Cytoplasmic segment spans residues 224 to 240 (SSICSISSVQGKYTAFS). The helical transmembrane segment at 241–261 (TCVSHLSIVFLFYSTGLGVYV) threads the bilayer. Residues 262-272 (SSAVVQSSHSA) are Extracellular-facing. Residues 273–293 (ARASVMYTVVTPMLNPFIYSL) traverse the membrane as a helical segment. Over 294-310 (RNKDVKKALERLLEGKL) the chain is Cytoplasmic.

It belongs to the G-protein coupled receptor 1 family.

Its subcellular location is the cell membrane. Its function is as follows. Odorant receptor. In Mus musculus (Mouse), this protein is Olfactory receptor 7A42.